A 334-amino-acid chain; its full sequence is Holliday junction branch migration complex subunit RuvB (334 aa).

Residues 4–184 (ADRLISAAVI…FGIVQRLEFY (181 aa)) form a large ATPase domain (RuvB-L) region. ATP is bound by residues Ile23, Arg24, Gly65, Lys68, Thr69, Thr70, 131 to 133 (EDY), Arg174, Tyr184, and Arg221. Thr69 is a binding site for Mg(2+). The interval 185–255 (PVADLEHIVS…VAMKALDMLN (71 aa)) is small ATPAse domain (RuvB-S). The interval 258 to 334 (AEGFDFMDRK…YKHFGITREE (77 aa)) is head domain (RuvB-H). Residues Arg294, Arg313, and Arg318 each contribute to the DNA site.

It belongs to the RuvB family. In terms of assembly, homohexamer. Forms an RuvA(8)-RuvB(12)-Holliday junction (HJ) complex. HJ DNA is sandwiched between 2 RuvA tetramers; dsDNA enters through RuvA and exits via RuvB. An RuvB hexamer assembles on each DNA strand where it exits the tetramer. Each RuvB hexamer is contacted by two RuvA subunits (via domain III) on 2 adjacent RuvB subunits; this complex drives branch migration. In the full resolvosome a probable DNA-RuvA(4)-RuvB(12)-RuvC(2) complex forms which resolves the HJ.

It is found in the cytoplasm. The catalysed reaction is ATP + H2O = ADP + phosphate + H(+). Functionally, the RuvA-RuvB-RuvC complex processes Holliday junction (HJ) DNA during genetic recombination and DNA repair, while the RuvA-RuvB complex plays an important role in the rescue of blocked DNA replication forks via replication fork reversal (RFR). RuvA specifically binds to HJ cruciform DNA, conferring on it an open structure. The RuvB hexamer acts as an ATP-dependent pump, pulling dsDNA into and through the RuvAB complex. RuvB forms 2 homohexamers on either side of HJ DNA bound by 1 or 2 RuvA tetramers; 4 subunits per hexamer contact DNA at a time. Coordinated motions by a converter formed by DNA-disengaged RuvB subunits stimulates ATP hydrolysis and nucleotide exchange. Immobilization of the converter enables RuvB to convert the ATP-contained energy into a lever motion, pulling 2 nucleotides of DNA out of the RuvA tetramer per ATP hydrolyzed, thus driving DNA branch migration. The RuvB motors rotate together with the DNA substrate, which together with the progressing nucleotide cycle form the mechanistic basis for DNA recombination by continuous HJ branch migration. Branch migration allows RuvC to scan DNA until it finds its consensus sequence, where it cleaves and resolves cruciform DNA. This is Holliday junction branch migration complex subunit RuvB from Yersinia pestis bv. Antiqua (strain Angola).